The following is an 864-amino-acid chain: NT-3 growth factor receptor (864 aa).

The signal sequence occupies residues methionine 1 to alanine 31. 2 disulfides stabilise this stretch: cysteine 32-cysteine 38 and cysteine 36-cysteine 45. The Extracellular segment spans residues cysteine 32–threonine 429. N-linked (GlcNAc...) asparagine glycans are attached at residues asparagine 68, asparagine 72, and asparagine 79. LRR repeat units follow at residues glycine 104–lysine 125 and histidine 128–threonine 149. Residues asparagine 133 and asparagine 163 are each glycosylated (N-linked (GlcNAc...) asparagine). Residues asparagine 160–leucine 209 form the LRRCT domain. Intrachain disulfides connect cysteine 164–cysteine 189 and cysteine 166–cysteine 207. N-linked (GlcNAc...) asparagine glycosylation is found at asparagine 203, asparagine 218, asparagine 232, asparagine 259, asparagine 267, asparagine 272, and asparagine 294. Ig-like C2-type domains are found at residues proline 210 to threonine 300 and serine 309 to asparagine 382. Cysteine 231 and cysteine 284 are joined by a disulfide. Cysteine 320 and cysteine 362 form a disulfide bridge. 2 N-linked (GlcNAc...) asparagine glycosylation sites follow: asparagine 375 and asparagine 388. Residues phenylalanine 430–isoleucine 453 traverse the membrane as a helical segment. Topologically, residues asparagine 454–glycine 864 are cytoplasmic. Serine 493 carries the post-translational modification Phosphoserine. Tyrosine 516 is modified (phosphotyrosine; by autocatalysis). The 316-residue stretch at isoleucine 538–glycine 853 folds into the Protein kinase domain. Residues leucine 544–valine 552 and lysine 572 each bind ATP. The active-site Proton acceptor is the aspartate 679. Tyrosine 705, tyrosine 709, tyrosine 710, and tyrosine 859 each carry phosphotyrosine; by autocatalysis.

Belongs to the protein kinase superfamily. Tyr protein kinase family. Insulin receptor subfamily. As to quaternary structure, exists in a dynamic equilibrium between monomeric (low affinity) and dimeric (high affinity) structures. Binds SH2B2. Interacts with SQSTM1 and KIDINS220. Interacts with PTPRS. Interacts with MAPK8IP3/JIP3. Post-translationally, ligand-mediated auto-phosphorylation. As to expression, widely expressed, mainly in the nervous tissue.

It is found in the membrane. It carries out the reaction L-tyrosyl-[protein] + ATP = O-phospho-L-tyrosyl-[protein] + ADP + H(+). Functionally, receptor tyrosine kinase involved in nervous system and probably heart development. Upon binding of its ligand NTF3/neurotrophin-3, NTRK3 autophosphorylates and activates different signaling pathways, including the phosphatidylinositol 3-kinase/AKT and the MAPK pathways, that control cell survival and differentiation. NTRK3 isoforms containing insertions within the kinase domain can autophosphorylate in response to NTF3/neurotrophin-3, but cannot mediate downstream phenotypic responses. The chain is NT-3 growth factor receptor (Ntrk3) from Rattus norvegicus (Rat).